Consider the following 353-residue polypeptide: Vomeronasal type-1 receptor 1 (353 aa).

Residues 1–56 (MVGDTLKLLSPLMTRYFFLLFYSTDSSDLNENQHPLDFDEMAFGKVKSGISFLIQT) are Extracellular-facing. Residues 57 to 77 (GVGILGNSFLLCFYNLILFTG) traverse the membrane as a helical segment. Topologically, residues 78 to 84 (HKLRPTD) are cytoplasmic. Residues 85-105 (LILSQLALANSMVLFFKGIPQ) traverse the membrane as a helical segment. Over 106 to 132 (TMAAFGLKYLLNDTGCKFVFYYHRVGT) the chain is Extracellular. Asparagine 117 carries N-linked (GlcNAc...) asparagine glycosylation. Residues 133–153 (RVSLSTICLLNGFQAIKLNPS) traverse the membrane as a helical segment. At 154–169 (ICRWMEIKIRSPRFID) the chain is on the cytoplasmic side. A helical membrane pass occupies residues 170–190 (FCCLLCWAPHVLMNASVLLLV). Topologically, residues 191–226 (NGPLNSKNSSAKNNYGYCSYKASKRFSSLHAVLYFS) are extracellular. N-linked (GlcNAc...) asparagine glycosylation occurs at asparagine 198. The chain crosses the membrane as a helical span at residues 227 to 247 (PDFMSLGFMVWASGSMVFFLY). The Cytoplasmic segment spans residues 248 to 274 (RHKQQVQHNHSNRLSCRPSQEARATHT). The helical transmembrane segment at 275 to 295 (IMVLVSSFFVFYSVHSFLTIW) threads the bilayer. Residues 296–303 (TTVVANPG) are Extracellular-facing. A helical membrane pass occupies residues 304 to 324 (QWIVTNSVLVASCFPARSPFV). Residues 325–353 (LIMSDTHISQFCFACRTRKTLFPNLVVMP) lie on the Cytoplasmic side of the membrane.

It belongs to the G-protein coupled receptor 1 family. Expressed in the olfactory mucosa, very low expression in brain, lung and kidney.

It localises to the cell membrane. Functionally, putative pheromone receptor. The sequence is that of Vomeronasal type-1 receptor 1 (VN1R1) from Homo sapiens (Human).